Here is a 363-residue protein sequence, read N- to C-terminus: Cyclin-D1-1 (363 aa).

A disordered region spans residues 39–77 (ELEREGEPAQGSSPSSSLSCAAAAAAAADDDDEDEDEHG). Residues 50–65 (SSPSSSLSCAAAAAAA) show a composition bias toward low complexity. Acidic residues predominate over residues 66 to 75 (ADDDDEDEDE).

Belongs to the cyclin family. Cyclin D subfamily.

The polypeptide is Cyclin-D1-1 (CYCD1-1) (Oryza sativa subsp. japonica (Rice)).